The chain runs to 229 residues: Enolase-phosphatase E1 (229 aa).

The protein belongs to the HAD-like hydrolase superfamily. MasA/MtnC family. In terms of assembly, monomer. The cofactor is Mg(2+).

The enzyme catalyses 5-methylsulfanyl-2,3-dioxopentyl phosphate + H2O = 1,2-dihydroxy-5-(methylsulfanyl)pent-1-en-3-one + phosphate. The protein operates within amino-acid biosynthesis; L-methionine biosynthesis via salvage pathway; L-methionine from S-methyl-5-thio-alpha-D-ribose 1-phosphate: step 3/6. Its pathway is amino-acid biosynthesis; L-methionine biosynthesis via salvage pathway; L-methionine from S-methyl-5-thio-alpha-D-ribose 1-phosphate: step 4/6. Functionally, bifunctional enzyme that catalyzes the enolization of 2,3-diketo-5-methylthiopentyl-1-phosphate (DK-MTP-1-P) into the intermediate 2-hydroxy-3-keto-5-methylthiopentenyl-1-phosphate (HK-MTPenyl-1-P), which is then dephosphorylated to form the acireductone 1,2-dihydroxy-3-keto-5-methylthiopentene (DHK-MTPene). This is Enolase-phosphatase E1 from Yersinia pestis (strain Pestoides F).